A 212-amino-acid polypeptide reads, in one-letter code: MRGYFVSFEGPDGAGKSTVLKEVLDQIGPKLKPQYLVTREPGGSKIAEKIRDIILDPANDKMDAKTEALLYAAARSQHVEEIIRPALSEGKIVFSDRFVDSSLAYQGEGRDLGIEEVKQINDFATGKLDPDLTFFLDIAPEIGLSRIQKLRPGQEDRLEQENIAFHKKVYNGFLKVKDLYPDRFVTIDATQPIEDVVNQVIATLEKRLPEIF.

10-17 is an ATP binding site; that stretch reads GPDGAGKS.

The protein belongs to the thymidylate kinase family.

The catalysed reaction is dTMP + ATP = dTDP + ADP. Its function is as follows. Phosphorylation of dTMP to form dTDP in both de novo and salvage pathways of dTTP synthesis. The sequence is that of Thymidylate kinase from Lactobacillus helveticus (strain DPC 4571).